The following is a 245-amino-acid chain: Gem-associated protein 2 (245 aa).

This sequence belongs to the gemin-2 family. As to quaternary structure, component of the core survival motor neuron (SMN) complex composed of Smn, Gem2, Gem3, rig/Gem5 and one of 3 almost identical Gem4 paralogs encoded by Glos/Gem4a, Gem4b or Gem4c. Part of a minimal SMN complex composed of Smn and Gem2 only; this complex is active in UsnRNP assembly. The SMN complex associates with the entire set of spliceosomal snRNP Sm proteins, SmB, SmD1, SmD2, SmD3, SmE, SmF and SmG, and with the snRNP-specific proteins snRNP-U1-70K, U2A, snf/U1A and U5-116KD. Expressed in nurse cells and oocytes.

It is found in the cytoplasm. The protein localises to the U-body. In terms of biological role, component of the survival motor neuron (SMN) complex that catalyzes the assembly of small nuclear ribonucleoproteins (snRNPs), the building blocks of the spliceosome, and thereby plays an important role in the splicing of cellular pre-mRNAs. Most spliceosomal snRNPs contain a common set of Sm proteins SNRPB, SNRPD1, SNRPD2, SNRPD3, SNRPE, SNRPF and SNRPG that assemble in a heptameric protein ring on the Sm site of the small nuclear RNA to form the core snRNP (Sm core). In the cytosol, the Sm proteins SNRPD1, SNRPD2, SNRPE, SNRPF and SNRPG (5Sm) are trapped in an inactive 6S pICln-Sm complex by the chaperone CLNS1A that controls the assembly of the core snRNP. To assemble core snRNPs, the SMN complex accepts the trapped 5Sm proteins from CLNS1A. Binding of snRNA inside 5Sm ultimately triggers eviction of the SMN complex, thereby allowing binding of SNRPD3 and SNRPB to complete assembly of the core snRNP. Within the SMN complex, GEMIN2 constrains the conformation of 5Sm, thereby promoting 5Sm binding to snRNA containing the snRNP code (a nonameric Sm site and a 3'-adjacent stem-loop), thus preventing progression of assembly until a cognate substrate is bound. Involved in adult motor function. The protein is Gem-associated protein 2 of Drosophila melanogaster (Fruit fly).